A 179-amino-acid polypeptide reads, in one-letter code: MAVFKTTLWRLISGTLGIICLSLMATLGILLKNSFTKLSVEPAYTPGPNIELQKDSDCCSCHEKWVGYRCNCYFISSEEKTWNESRHFCASQKSSLLQLQNRDELDFMSSSQHFYWIGLSYSEEHTAWLWENGSALSQYLFPSFETFKPKNCIAYNSKGNALDESCETKNRYICKQQLI.

Over M1–R10 the chain is Cytoplasmic. Residues L11 to L31 traverse the membrane as a helical; Signal-anchor for type II membrane protein segment. Over K32–I179 the chain is Extracellular. 2 cysteine pairs are disulfide-bonded: C58–C70 and C61–C72. Positions Y68–K175 constitute a C-type lectin domain. Residues N83 and N132 are each glycosylated (N-linked (GlcNAc...) asparagine). Cystine bridges form between C89-C174 and C152-C166.

As to quaternary structure, can form disulfide-bonded heterodimer with NKG2 family members KLRC1 and KLRC2. KLRD1-KLRC1 heterodimer interacts with peptide-bound MHC-E-B2M heterotrimeric complex. KLRD1 plays a prominent role in directly interacting with MHC-E. KLRD1-KLRC1 interacts with much higher affinity with peptide-bound MHC-E-B2M than KLRD1-KLRC2. Interacts with the adapter protein TYROBP/DAP12; this interaction is required for cell surface expression and cell activation. As to expression, natural killer cells.

It localises to the cell membrane. In terms of biological role, immune receptor involved in self-nonself discrimination. In complex with KLRC1 or KLRC2 on cytotoxic and regulatory lymphocyte subsets, recognizes non-classical major histocompatibility (MHC) class Ib molecule MHC-E loaded with self-peptides derived from the signal sequence of classical MHC class Ia and non-classical MHC class Ib molecules. Enables cytotoxic cells to monitor the expression of MHC class I molecules in healthy cells and to tolerate self. Primarily functions as a ligand binding subunit as it lacks the capacity to signal. KLRD1-KLRC1 acts as an immune inhibitory receptor. Key inhibitory receptor on natural killer (NK) cells that regulates their activation and effector functions. Dominantly counteracts T cell receptor signaling on a subset of memory/effector CD8-positive T cells as part of an antigen-driven response to avoid autoimmunity. On intraepithelial CD8-positive gamma-delta regulatory T cells triggers TGFB1 secretion, which in turn limits the cytotoxic programming of intraepithelial CD8-positive alpha-beta T cells, distinguishing harmless from pathogenic antigens. In MHC-E-rich tumor microenvironment, acts as an immune inhibitory checkpoint and may contribute to progressive loss of effector functions of NK cells and tumor-specific T cells, a state known as cell exhaustion. Upon MHC-E-peptide binding, transmits intracellular signals through KLRC1 immunoreceptor tyrosine-based inhibition motifs (ITIMs) by recruiting INPP5D/SHIP-1 and INPPL1/SHIP-2 tyrosine phosphatases to ITIMs, and ultimately opposing signals transmitted by activating receptors through dephosphorylation of proximal signaling molecules. Its function is as follows. KLRD1-KLRC2 acts as an immune activating receptor. On cytotoxic lymphocyte subsets recognizes MHC-E loaded with signal sequence-derived peptides from non-classical MHC class Ib MHC-G molecules, likely playing a role in the generation and effector functions of adaptive NK cells and in maternal-fetal tolerance during pregnancy. Regulates the effector functions of terminally differentiated cytotoxic lymphocyte subsets, and in particular may play a role in adaptive NK cell response to viral infection. Upon MHC-E-peptide binding, transmits intracellular signals via the adapter protein TYROBP/DAP12, triggering the phosphorylation of proximal signaling molecules and cell activation. This Macaca mulatta (Rhesus macaque) protein is Natural killer cells antigen CD94 (KLRD1).